The chain runs to 473 residues: Cysteine protease ATG4A (473 aa).

The tract at residues 1–33 (MTSLPGRGVSPSSSDPLCEGNAAPSSSSSGQDL) is disordered. The active-site Nucleophile is Cys-160. Residues Asp-357 and His-359 contribute to the active site.

This sequence belongs to the peptidase C54 family. Interacts with ATG8.

It localises to the cytoplasm. It catalyses the reaction [protein]-C-terminal L-amino acid-glycyl-phosphatidylethanolamide + H2O = [protein]-C-terminal L-amino acid-glycine + a 1,2-diacyl-sn-glycero-3-phosphoethanolamine. Cysteine protease that plays a key role in autophagy by mediating both proteolytic activation and delipidation of ATG8 family proteins. The protease activity is required for proteolytic activation of ATG8 family proteins: cleaves the C-terminal amino acid of ATG8 proteins to reveal a C-terminal glycine. Exposure of the glycine at the C-terminus is essential for ATG8 proteins conjugation to phosphatidylethanolamine (PE) and insertion to membranes, which is necessary for autophagy. In addition to the protease activity, also mediates delipidation of PE-conjugated ATG8 proteins. In Oryza sativa subsp. indica (Rice), this protein is Cysteine protease ATG4A (ATG4A).